Consider the following 809-residue polypeptide: Hydrazine synthase subunit alpha (809 aa).

The N-terminal stretch at 1–27 is a signal peptide; that stretch reads MGKRKLGVIASAFVAGALVCGSTLVNA. C303 is a binding site for Zn(2+). 2 residues coordinate heme: C583 and C586. H587 contacts Zn(2+). The heme site is built by Y591, C685, C688, H689, and H772. Residues 633-792 form the Cytochrome c domain; that stretch reads KGVKHGEDVV…AIVEWIDLGA (160 aa).

Part of the hydrazine synthase complex that forms an elongated dimer of heterotrimers composed of one alpha, one beta and one gamma subunit. It depends on heme c as a cofactor.

The protein localises to the anammoxosome. The catalysed reaction is hydrazine + 3 Fe(III)-[cytochrome c] + H2O = nitric oxide + 3 Fe(II)-[cytochrome c] + NH4(+) + 2 H(+). It participates in nitrogen metabolism. Its function is as follows. Component of the hydrazine synthase complex that catalyzes the condensation of nitric oxide (NO) with ammonium to form hydrazine. The alpha subunit catalyzes the second half-reaction, i.e. the condensation of hydroxylamine formed in the active site of the gamma subunit with ammonia, yielding hydrazine. Is involved in anaerobic ammonium oxidation (anammox), a biological process in which nitrite is used as the electron acceptor in the conversion of ammonium to dinitrogen gas (N2) and water; this bacterial process has a major role in the Earth's nitrogen cycle and has been estimated to synthesize up to 50% of the dinitrogen gas emitted into our atmosphere from the oceans. The polypeptide is Hydrazine synthase subunit alpha (Kuenenia stuttgartiensis).